Here is a 198-residue protein sequence, read N- to C-terminus: Putative peptidyl-prolyl cis-trans isomerase (198 aa).

The region spanning 14–195 (NEIKVAMHTN…HDVVIESIDV (182 aa)) is the PPIase cyclophilin-type domain.

The protein belongs to the cyclophilin-type PPIase family.

It carries out the reaction [protein]-peptidylproline (omega=180) = [protein]-peptidylproline (omega=0). In terms of biological role, PPIases accelerate the folding of proteins. It catalyzes the cis-trans isomerization of proline imidic peptide bonds in oligopeptides. The sequence is that of Putative peptidyl-prolyl cis-trans isomerase from Staphylococcus haemolyticus (strain JCSC1435).